Here is a 137-residue protein sequence, read N- to C-terminus: Small heat shock protein IbpA (137 aa).

A sHSP domain is found at Ser28–Asn137.

Belongs to the small heat shock protein (HSP20) family. Monomer. Forms homomultimers of about 100-150 subunits at optimal growth temperatures. Conformation changes to monomers at high temperatures or high ionic concentrations.

The protein resides in the cytoplasm. Its function is as follows. Associates with aggregated proteins, together with IbpB, to stabilize and protect them from irreversible denaturation and extensive proteolysis during heat shock and oxidative stress. Aggregated proteins bound to the IbpAB complex are more efficiently refolded and reactivated by the ATP-dependent chaperone systems ClpB and DnaK/DnaJ/GrpE. Its activity is ATP-independent. This is Small heat shock protein IbpA from Shigella sonnei (strain Ss046).